Here is a 244-residue protein sequence, read N- to C-terminus: MNEKNIKHSQNFITSKHNIDKIMTNIRLNEHDNIFEIGSGKGHFTLELVQRCNFVTAIEIDHKLCKTTENKLVDHDNFQVLNKDILQFKFPKNQSYKIFGNIPYNISTDIIRKIVFDSIADEIYLIVEYGFAKRLLNTKRSLALFLMAEVDISILSMVPREYFHPKPRVNSSLIRLNRKKSRISHKDKQKYNYFVMKWVNKEYKKIFTKNQFNNSLKHAGIDDLNNISFEQFLSLFNSYKLFNK.

Asn-11, Ile-13, Gly-38, Glu-59, Asp-84, and Asn-101 together coordinate S-adenosyl-L-methionine.

This sequence belongs to the class I-like SAM-binding methyltransferase superfamily. rRNA adenine N(6)-methyltransferase family.

It catalyses the reaction adenosine(2085) in 23S rRNA + 2 S-adenosyl-L-methionine = N(6)-dimethyladenosine(2085) in 23S rRNA + 2 S-adenosyl-L-homocysteine + 2 H(+). Functionally, this protein produces a dimethylation of the adenine residue at position 2085 in 23S rRNA, resulting in reduced affinity between ribosomes and macrolide-lincosamide-streptogramin B antibiotics. This is rRNA adenine N-6-methyltransferase (ermC) from Staphylococcus aureus.